The primary structure comprises 69 residues: Metallothionein-like protein CRS5 (69 aa).

Belongs to the metallothionein superfamily. Type 13 family.

Functionally, critical role in copper (specific) homeostasis and detoxification. May protect by directly chelating and sequestering copper ions. The protein is Metallothionein-like protein CRS5 (CRS5) of Saccharomyces cerevisiae (strain RM11-1a) (Baker's yeast).